We begin with the raw amino-acid sequence, 61 residues long: Large ribosomal subunit protein bL32 (61 aa).

A compositionally biased stretch (basic residues) spans 1–16; the sequence is MAVPRRKTSPSRRGMR. The tract at residues 1-61 is disordered; sequence MAVPRRKTSP…RQVLKVKKED (61 aa). Over residues 17 to 44 the composition is skewed to basic and acidic residues; it reads RSADALKKPTYVEDKDSGELRRPHHLDL.

The protein belongs to the bacterial ribosomal protein bL32 family.

This chain is Large ribosomal subunit protein bL32, found in Afipia carboxidovorans (strain ATCC 49405 / DSM 1227 / KCTC 32145 / OM5) (Oligotropha carboxidovorans).